Consider the following 701-residue polypeptide: Methionine--tRNA ligase (701 aa).

The short motif at Pro13–His23 is the 'HIGH' region element. Zn(2+)-binding residues include Cys144, Cys147, Cys157, and Cys160. The 'KMSKS' region motif lies at Lys336–Ser340. An ATP-binding site is contributed by Lys339. Residues Asp600–Lys701 form the tRNA-binding domain.

It belongs to the class-I aminoacyl-tRNA synthetase family. MetG type 1 subfamily. As to quaternary structure, homodimer. Zn(2+) is required as a cofactor.

The protein localises to the cytoplasm. The catalysed reaction is tRNA(Met) + L-methionine + ATP = L-methionyl-tRNA(Met) + AMP + diphosphate. Its function is as follows. Is required not only for elongation of protein synthesis but also for the initiation of all mRNA translation through initiator tRNA(fMet) aminoacylation. In Nitrosomonas eutropha (strain DSM 101675 / C91 / Nm57), this protein is Methionine--tRNA ligase.